A 142-amino-acid chain; its full sequence is Galactose-binding lectin (142 aa).

The region spanning 1–141 (TYAEVESFGV…GTDIWDLLLL (141 aa)) is the Galectin domain.

In terms of assembly, homotetramer.

With respect to regulation, cytotoxic activity against L.infantum promastigotes is completely inhibited by D-galactose. Inhibition activity against biofilm formation by S.aureus and S.epidermidis is inhibited by alpha-lactose. Hemagglutination activity is inhibited by alpha-lactose (MIC=100 mM), beta-lactose (MIC=100 mM), lactulose (MIC=100 mM), bovine submaxillary mucin (BSM) (MIC=32 ug/ml), fetuin (MIC=16 ug/ml), porcine stomach mucin (PSM) type 2 (MIC=8 ug/ml) and PSM type 3 (MIC=8 ug/ml). Its function is as follows. Galactose-binding lectin. Displays antibacterial and hemagglutinin activity. Inhibits the growth of L.infantum promastigotes by damaging their membrane integrity and inducing cell apoptosis via the production of reactive oxygen species (ROS). Inhibition of L.infantum promastigotes appears to increase with time (MIC=1.2 uM/ml after 24 hours, MIC=0.9 uM/ml after 48 hours and MIC=0.6 uM/ml after 72 hours). Agglutinates Gram-negative and Gram-positive bacteria including E.coli, S.aureus and S.epidermidis, and inhibits biofilm formation by S.aureus and S.epidermidis. Displays hemagglutination activity towards all types of human erythrocytes (O, A and B) and rabbit erythrocytes. The sequence is that of Galactose-binding lectin from Chondrilla caribensis (Chicken liver sponge).